A 306-amino-acid polypeptide reads, in one-letter code: 4-hydroxy-3-methylbut-2-enyl diphosphate reductase (306 aa).

Cysteine 12 contacts [4Fe-4S] cluster. Histidine 41 and histidine 74 together coordinate (2E)-4-hydroxy-3-methylbut-2-enyl diphosphate. Positions 41 and 74 each coordinate dimethylallyl diphosphate. Positions 41 and 74 each coordinate isopentenyl diphosphate. Position 96 (cysteine 96) interacts with [4Fe-4S] cluster. Histidine 124 lines the (2E)-4-hydroxy-3-methylbut-2-enyl diphosphate pocket. Histidine 124 lines the dimethylallyl diphosphate pocket. Histidine 124 provides a ligand contact to isopentenyl diphosphate. The active-site Proton donor is the glutamate 126. Threonine 164 contributes to the (2E)-4-hydroxy-3-methylbut-2-enyl diphosphate binding site. Residue cysteine 194 coordinates [4Fe-4S] cluster. Residues serine 222, serine 223, asparagine 224, and serine 266 each contribute to the (2E)-4-hydroxy-3-methylbut-2-enyl diphosphate site. Dimethylallyl diphosphate contacts are provided by serine 222, serine 223, asparagine 224, and serine 266. The isopentenyl diphosphate site is built by serine 222, serine 223, asparagine 224, and serine 266.

This sequence belongs to the IspH family. [4Fe-4S] cluster serves as cofactor.

It carries out the reaction isopentenyl diphosphate + 2 oxidized [2Fe-2S]-[ferredoxin] + H2O = (2E)-4-hydroxy-3-methylbut-2-enyl diphosphate + 2 reduced [2Fe-2S]-[ferredoxin] + 2 H(+). The enzyme catalyses dimethylallyl diphosphate + 2 oxidized [2Fe-2S]-[ferredoxin] + H2O = (2E)-4-hydroxy-3-methylbut-2-enyl diphosphate + 2 reduced [2Fe-2S]-[ferredoxin] + 2 H(+). It functions in the pathway isoprenoid biosynthesis; dimethylallyl diphosphate biosynthesis; dimethylallyl diphosphate from (2E)-4-hydroxy-3-methylbutenyl diphosphate: step 1/1. The protein operates within isoprenoid biosynthesis; isopentenyl diphosphate biosynthesis via DXP pathway; isopentenyl diphosphate from 1-deoxy-D-xylulose 5-phosphate: step 6/6. Its function is as follows. Catalyzes the conversion of 1-hydroxy-2-methyl-2-(E)-butenyl 4-diphosphate (HMBPP) into a mixture of isopentenyl diphosphate (IPP) and dimethylallyl diphosphate (DMAPP). Acts in the terminal step of the DOXP/MEP pathway for isoprenoid precursor biosynthesis. The sequence is that of 4-hydroxy-3-methylbut-2-enyl diphosphate reductase from Dechloromonas aromatica (strain RCB).